The sequence spans 151 residues: Deoxyuridine 5'-triphosphate nucleotidohydrolase (151 aa).

Substrate is bound by residues 70-72 (RSG), Asn83, 87-89 (LID), and Met97.

It belongs to the dUTPase family. Mg(2+) is required as a cofactor.

It carries out the reaction dUTP + H2O = dUMP + diphosphate + H(+). It functions in the pathway pyrimidine metabolism; dUMP biosynthesis; dUMP from dCTP (dUTP route): step 2/2. This enzyme is involved in nucleotide metabolism: it produces dUMP, the immediate precursor of thymidine nucleotides and it decreases the intracellular concentration of dUTP so that uracil cannot be incorporated into DNA. The protein is Deoxyuridine 5'-triphosphate nucleotidohydrolase of Pseudomonas syringae pv. tomato (strain ATCC BAA-871 / DC3000).